Consider the following 316-residue polypeptide: MASCVVKNWQGETVGSAELSLKVARPETAAHILYLALRRQMTNARQGNAHTKTRAEVRGGGRKPWKQKGTGRARAGSIRSPLWRKGGVIFGPRKREYNLAMNRKERQLALRTALQSRVEDLIVVEDFQEQLNPPKTRAVAQALLRWGVMEDQSALLIVAERSEAVERAVRNIARVKLIGLDQINVFDLLNVDWVLITVSALEQLKARWGSDAAPAVLETPSEDAPQADIAEDQALPGDGPEDQAVPESEHEEAEQTPAQPEAQENQAALQGRPADPQGPEEQTEEPQDPAEELAQGAEPSTVEEAETAPAEEESDD.

Positions 1 to 211 are large ribosomal subunit protein uL4; the sequence is MASCVVKNWQ…EQLKARWGSD (211 aa). Disordered regions lie at residues 44–76 and 231–316; these read ARQG…ARAG and EDQA…ESDD. A compositionally biased stretch (basic residues) spans 60-71; the sequence is GGRKPWKQKGTG. The interval 212 to 316 is unknown; that stretch reads AAPAVLETPS…TAPAEEESDD (105 aa). Residues 255 to 270 are compositionally biased toward low complexity; sequence QTPAQPEAQENQAALQ. Composition is skewed to acidic residues over residues 281 to 291 and 301 to 316; these read EQTEEPQDPAE and TVEE…ESDD.

This sequence belongs to the universal ribosomal protein uL4 family. In terms of assembly, part of the 50S ribosomal subunit.

Its function is as follows. One of the primary rRNA binding proteins, this protein initially binds near the 5'-end of the 23S rRNA. It is important during the early stages of 50S assembly. It makes multiple contacts with different domains of the 23S rRNA in the assembled 50S subunit and ribosome. Forms part of the polypeptide exit tunnel. The chain is Large ribosomal subunit protein uL4 from Synechococcus sp. (strain JA-2-3B'a(2-13)) (Cyanobacteria bacterium Yellowstone B-Prime).